We begin with the raw amino-acid sequence, 307 residues long: UDP-3-O-acyl-N-acetylglucosamine deacetylase (307 aa).

3 residues coordinate Zn(2+): H78, H235, and D239. The active-site Proton donor is the H262.

It belongs to the LpxC family. The cofactor is Zn(2+).

The catalysed reaction is a UDP-3-O-[(3R)-3-hydroxyacyl]-N-acetyl-alpha-D-glucosamine + H2O = a UDP-3-O-[(3R)-3-hydroxyacyl]-alpha-D-glucosamine + acetate. Its pathway is glycolipid biosynthesis; lipid IV(A) biosynthesis; lipid IV(A) from (3R)-3-hydroxytetradecanoyl-[acyl-carrier-protein] and UDP-N-acetyl-alpha-D-glucosamine: step 2/6. Functionally, catalyzes the hydrolysis of UDP-3-O-myristoyl-N-acetylglucosamine to form UDP-3-O-myristoylglucosamine and acetate, the committed step in lipid A biosynthesis. The polypeptide is UDP-3-O-acyl-N-acetylglucosamine deacetylase (Geotalea uraniireducens (strain Rf4) (Geobacter uraniireducens)).